We begin with the raw amino-acid sequence, 242 residues long: Orotidine 5'-phosphate decarboxylase (242 aa).

Residues Asp21, Lys43, Asp71–Thr80, Thr124, Arg185, Gln195, Gly215, and Arg216 each bind substrate. The Proton donor role is filled by Lys73.

The protein belongs to the OMP decarboxylase family. Type 1 subfamily. Homodimer.

The catalysed reaction is orotidine 5'-phosphate + H(+) = UMP + CO2. Its pathway is pyrimidine metabolism; UMP biosynthesis via de novo pathway; UMP from orotate: step 2/2. Catalyzes the decarboxylation of orotidine 5'-monophosphate (OMP) to uridine 5'-monophosphate (UMP). The protein is Orotidine 5'-phosphate decarboxylase of Methylococcus capsulatus (strain ATCC 33009 / NCIMB 11132 / Bath).